The following is a 1383-amino-acid chain: DNA-directed RNA polymerase subunit beta (1383 aa).

This sequence belongs to the RNA polymerase beta chain family. The RNAP catalytic core consists of 2 alpha, 1 beta, 1 beta' and 1 omega subunit. When a sigma factor is associated with the core the holoenzyme is formed, which can initiate transcription.

The enzyme catalyses RNA(n) + a ribonucleoside 5'-triphosphate = RNA(n+1) + diphosphate. DNA-dependent RNA polymerase catalyzes the transcription of DNA into RNA using the four ribonucleoside triphosphates as substrates. In Bartonella quintana (strain Toulouse) (Rochalimaea quintana), this protein is DNA-directed RNA polymerase subunit beta.